Reading from the N-terminus, the 228-residue chain is Sodium channel regulatory subunit beta-4 (228 aa).

Positions 1–30 are cleaved as a signal peptide; sequence MPGARDQGAARARWLGIGLLGLFLLPVSLS. The Ig-like C2-type domain maps to 31–148; that stretch reads LEVSVGKATT…NDFQHQATIF (118 aa). Over 31-162 the chain is Extracellular; the sequence is LEVSVGKATT…DKLEEVDNTV (132 aa). Residues N45, N71, and N113 are each glycosylated (N-linked (GlcNAc...) asparagine). A disulfide bridge links C53 with C131. The helical transmembrane segment at 163–183 threads the bilayer; the sequence is TLIILGVVGGVIGLLIFILLV. At 184–228 the chain is on the cytoplasmic side; sequence KKFIAFIIKKTQEKKKECLVSSSGNDNTENGLPGSKAEEKAPTKV. The disordered stretch occupies residues 198 to 228; the sequence is KKECLVSSSGNDNTENGLPGSKAEEKAPTKV. A compositionally biased stretch (polar residues) spans 203 to 213; it reads VSSSGNDNTEN. Positions 219–228 are enriched in basic and acidic residues; it reads KAEEKAPTKV.

Belongs to the sodium channel auxiliary subunit SCN4B (TC 8.A.17) family. As to quaternary structure, a voltage-gated sodium (Nav) channel consists of an ion-conducting pore-forming alpha subunit functional on its own that is regulated by one or more beta subunits. The beta subunit SCN4B is disulfide-linked to the pore-forming alpha subunit. Interacts with SCN1A; regulatory subunit of SCN1A/Nav1.1. Interacts with SCN2A; regulatory subunit of SCN2A/Nav1.2. Contains an interchain disulfide bond with SCN2A.

Its subcellular location is the cell membrane. Its function is as follows. Regulatory subunit of multiple voltage-gated sodium (Nav) channels directly mediating the depolarization of excitable membranes. Navs, also called VGSCs (voltage-gated sodium channels) or VDSCs (voltage-dependent sodium channels), operate by switching between closed and open conformations depending on the voltage difference across the membrane. In the open conformation they allow Na(+) ions to selectively pass through the pore, along their electrochemical gradient. The influx of Na+ ions provokes membrane depolarization, initiating the propagation of electrical signals throughout cells and tissues. The accessory beta subunits participate in localization and functional modulation of the Nav channels. Modulates the activity of SCN1A/Nav1.1. Modulates the activity of SCN2A/Nav1.2. The sequence is that of Sodium channel regulatory subunit beta-4 from Bos taurus (Bovine).